A 370-amino-acid polypeptide reads, in one-letter code: Dual-specificity RNA methyltransferase RlmN (370 aa).

Glu-93 functions as the Proton acceptor in the catalytic mechanism. Positions 99–337 (EEGRGTLCVS…VTTVRKTRGD (239 aa)) constitute a Radical SAM core domain. Residues Cys-106 and Cys-343 are joined by a disulfide bond. [4Fe-4S] cluster contacts are provided by Cys-113, Cys-117, and Cys-120. S-adenosyl-L-methionine contacts are provided by residues 167–168 (GE), Ser-199, 221–223 (SLH), and Asn-300. Cys-343 functions as the S-methylcysteine intermediate in the catalytic mechanism.

It belongs to the radical SAM superfamily. RlmN family. [4Fe-4S] cluster is required as a cofactor.

It is found in the cytoplasm. It carries out the reaction adenosine(2503) in 23S rRNA + 2 reduced [2Fe-2S]-[ferredoxin] + 2 S-adenosyl-L-methionine = 2-methyladenosine(2503) in 23S rRNA + 5'-deoxyadenosine + L-methionine + 2 oxidized [2Fe-2S]-[ferredoxin] + S-adenosyl-L-homocysteine. It catalyses the reaction adenosine(37) in tRNA + 2 reduced [2Fe-2S]-[ferredoxin] + 2 S-adenosyl-L-methionine = 2-methyladenosine(37) in tRNA + 5'-deoxyadenosine + L-methionine + 2 oxidized [2Fe-2S]-[ferredoxin] + S-adenosyl-L-homocysteine. Specifically methylates position 2 of adenine 2503 in 23S rRNA and position 2 of adenine 37 in tRNAs. m2A2503 modification seems to play a crucial role in the proofreading step occurring at the peptidyl transferase center and thus would serve to optimize ribosomal fidelity. The chain is Dual-specificity RNA methyltransferase RlmN from Francisella tularensis subsp. novicida (strain U112).